Reading from the N-terminus, the 588-residue chain is DELLA protein GAI (588 aa).

The span at 1-15 (MKRDRDRDREREKRA) shows a compositional bias: basic and acidic residues. The segment at 1–38 (MKRDRDRDREREKRAFSNGAVSSGKSKIWEEDEEEKPD) is disordered. A DELLA motif motif is present at residues 42–46 (DELLA). The interval 152 to 177 (GAVFNSDSNKRHRSTTSSFSTTSSSM) is disordered. The span at 166 to 177 (TTSSFSTTSSSM) shows a compositional bias: low complexity. The region spanning 190–574 (VDSQETGVRL…RPLIATSAWK (385 aa)) is the GRAS domain. The tract at residues 197-251 (VRLVHTLMACAEAVQQENLTLADQLVRHIGILAVSQSGAMRKVATYFAEALARRI) is leucine repeat I (LRI). The interval 269–334 (QMHFYETCPY…GGPPAFRLTG (66 aa)) is VHIID. The VHIID motif lies at 300–304 (VHVID). The tract at residues 348 to 380 (QVGWKLAQLAETIGVEFEFRGFVANSLADLDAT) is leucine repeat II (LRII). Residues 392 to 495 (VAINSVFELH…EVYLGRQICN (104 aa)) are PFYRE. An LXXLL motif motif is present at residues 400–404 (LHRLL). Positions 498 to 574 (ACEGSDRVER…RPLIATSAWK (77 aa)) are SAW.

Belongs to the GRAS family. DELLA subfamily. Phosphorylated. In terms of processing, ubiquitinated. Upon GA application it is ubiquitinated, leading to its subsequent degradation. Expressed in both vegetative and reproductive tissues.

The protein resides in the nucleus. Its function is as follows. Probable transcriptional regulator that acts as a repressor of the gibberellin (GA) signaling pathway. Probably acts by participating in large multiprotein complexes that repress transcription of GA-inducible genes. Upon GA application, it is degraded by the proteasome, allowing the GA signaling pathway. Its degradation is not essential for germination. This Solanum lycopersicum (Tomato) protein is DELLA protein GAI (GAI).